A 407-amino-acid chain; its full sequence is MSTVNQSSTRSELAGNWERLRKSCDTCQEAKVKCSQHKPSCHRCLRHRQPCVYSPQRRSGRPPKRPSPSSRLGPESNNSGDDIHNENTIQRTNLNANDSAMTDAGAVDPRVLTGDFAASTGIDPVDDIFQTSFESFLAASLSPKGGLLPGSHSNPTTPNGFSMNSPSITDPFGAFPFLITDHNLPIAALSSHVPPIDQLPVLSTGASNTSSECGDCGAKCYSSLLQHLLFLRQTLPESTRPSIDVIMQAEGHVRALLDRVLGCNACLGNRSSILLISAITERIVQMLDWIIEEKTLLDTENMRYNRRTFSSWGRPPRLPPHGLNGMRRNVCHVSLRVGNTELDEDAKQYFLKNFILLRLKKLAVKVQEVRRTATTRPGDCIYRAAELVLADSIQRLDYLRGQCQLWE.

A DNA-binding region (zn(2)-C6 fungal-type) is located at residues 23-53 (SCDTCQEAKVKCSQHKPSCHRCLRHRQPCVY). The disordered stretch occupies residues 53–85 (YSPQRRSGRPPKRPSPSSRLGPESNNSGDDIHN). Positions 75–85 (ESNNSGDDIHN) are enriched in polar residues.

It is found in the nucleus. Functionally, transcriptional regulator involved in the positive regulation of the expression of the gene cluster that mediates the biosynthesis of asperlin, a polyketide showing anti-inflammatory, antitumor and antibiotic activities. The chain is Transcriptional regulator alnR from Emericella nidulans (strain FGSC A4 / ATCC 38163 / CBS 112.46 / NRRL 194 / M139) (Aspergillus nidulans).